The following is a 279-amino-acid chain: S-methyl-5'-thioadenosine phosphorylase (279 aa).

Residues S13, 55-56 (RH), and 88-89 (TA) each bind phosphate. M191 serves as a coordination point for substrate. T192 is a binding site for phosphate. Substrate is bound at residue 215–217 (DYD).

This sequence belongs to the PNP/MTAP phosphorylase family. MTAP subfamily. In terms of assembly, homotrimer.

The protein resides in the cytoplasm. The protein localises to the nucleus. The catalysed reaction is S-methyl-5'-thioadenosine + phosphate = 5-(methylsulfanyl)-alpha-D-ribose 1-phosphate + adenine. The protein operates within amino-acid biosynthesis; L-methionine biosynthesis via salvage pathway; S-methyl-5-thio-alpha-D-ribose 1-phosphate from S-methyl-5'-thioadenosine (phosphorylase route): step 1/1. Catalyzes the reversible phosphorylation of S-methyl-5'-thioadenosine (MTA) to adenine and 5-methylthioribose-1-phosphate. Involved in the breakdown of MTA, a major by-product of polyamine biosynthesis. Responsible for the first step in the methionine salvage pathway after MTA has been generated from S-adenosylmethionine. Has broad substrate specificity with 6-aminopurine nucleosides as preferred substrates. In Anopheles darlingi (Mosquito), this protein is S-methyl-5'-thioadenosine phosphorylase.